The chain runs to 388 residues: Succinate--CoA ligase [ADP-forming] subunit beta (388 aa).

The ATP-grasp domain maps to 9–244 (KQLFAEYGLP…PSQDDPREAH (236 aa)). ATP contacts are provided by residues lysine 46, 53–55 (GRG), glutamate 99, threonine 102, and glutamate 107. Residues asparagine 199 and aspartate 213 each coordinate Mg(2+). Substrate-binding positions include asparagine 264 and 321 to 323 (GIV).

This sequence belongs to the succinate/malate CoA ligase beta subunit family. Heterotetramer of two alpha and two beta subunits. It depends on Mg(2+) as a cofactor.

It carries out the reaction succinate + ATP + CoA = succinyl-CoA + ADP + phosphate. It catalyses the reaction GTP + succinate + CoA = succinyl-CoA + GDP + phosphate. The protein operates within carbohydrate metabolism; tricarboxylic acid cycle; succinate from succinyl-CoA (ligase route): step 1/1. Functionally, succinyl-CoA synthetase functions in the citric acid cycle (TCA), coupling the hydrolysis of succinyl-CoA to the synthesis of either ATP or GTP and thus represents the only step of substrate-level phosphorylation in the TCA. The beta subunit provides nucleotide specificity of the enzyme and binds the substrate succinate, while the binding sites for coenzyme A and phosphate are found in the alpha subunit. This is Succinate--CoA ligase [ADP-forming] subunit beta from Aeromonas hydrophila subsp. hydrophila (strain ATCC 7966 / DSM 30187 / BCRC 13018 / CCUG 14551 / JCM 1027 / KCTC 2358 / NCIMB 9240 / NCTC 8049).